The sequence spans 274 residues: 2,3,4,5-tetrahydropyridine-2,6-dicarboxylate N-succinyltransferase (274 aa).

The substrate site is built by R104 and D141.

This sequence belongs to the transferase hexapeptide repeat family. Homotrimer.

The protein localises to the cytoplasm. The enzyme catalyses (S)-2,3,4,5-tetrahydrodipicolinate + succinyl-CoA + H2O = (S)-2-succinylamino-6-oxoheptanedioate + CoA. The protein operates within amino-acid biosynthesis; L-lysine biosynthesis via DAP pathway; LL-2,6-diaminopimelate from (S)-tetrahydrodipicolinate (succinylase route): step 1/3. The sequence is that of 2,3,4,5-tetrahydropyridine-2,6-dicarboxylate N-succinyltransferase from Shewanella oneidensis (strain ATCC 700550 / JCM 31522 / CIP 106686 / LMG 19005 / NCIMB 14063 / MR-1).